A 359-amino-acid polypeptide reads, in one-letter code: Transcription factor MafA (359 aa).

At Ser-14 the chain carries Phosphoserine. Residue Lys-32 forms a Glycyl lysine isopeptide (Lys-Gly) (interchain with G-Cter in SUMO2) linkage. 2 disordered regions span residues 40–105 (RFCH…VGGA) and 172–226 (GGGA…AGHH). Residues 46–73 (PPGSLSSTPLSTPCSSVPSSPSFCAPSP) are compositionally biased toward low complexity. Ser-49 is subject to Phosphoserine. Phosphothreonine occurs at positions 53 and 57. Phosphoserine occurs at positions 61 and 65. Gly residues predominate over residues 74 to 84 (GTGGGAGGGGS). Residues 181–209 (GHHHGAHHTAHHHHSAHHHHHHHHHHGGS) show a composition bias toward basic residues. Positions 210-224 (GHHGGGAGHGGGGAG) are enriched in gly residues. A basic motif region spans residues 260 to 285 (RLKQKRRTLKNRGYAQSCRFKRVQQR). The 64-residue stretch at 260–323 (RLKQKRRTLK…DLYKEKYEKL (64 aa)) folds into the bZIP domain. The tract at residues 288–309 (LESEKCQLQSQVEQLKLEVGRL) is leucine-zipper. Positions 322–359 (KLAGRGGPGGAGGAGFPREPSPAQAGPGAAKGAPDFFL) are disordered. Positions 325–336 (GRGGPGGAGGAG) are enriched in gly residues. Residues 343–359 (PAQAGPGAAKGAPDFFL) show a composition bias toward low complexity.

It belongs to the bZIP family. Maf subfamily. In terms of assembly, forms homodimers. Interacts with NEUROD1 and PDX1. May interact with MAFB, FOS, JUN and PCAF. Ubiquitinated, leading to its degradation by the proteasome. Post-translationally, phosphorylated at tyrosines. In terms of tissue distribution, expressed in brain, lung, spleen, pancreas and kidney. In the pancreas, expressed in the insulin-producing beta-cells of the islets of Langerhans (at protein level). Also expressed in the eye.

It localises to the nucleus. Transcriptional factor that activates insulin gene expression. Acts synergistically with NEUROD1/BETA2 and PDX1. Binds the insulin enhancer C1/RIPE3b element. Binds to consensus TRE-type MARE 5'-TGCTGACTCAGCA-3' DNA sequence. This is Transcription factor MafA (Mafa) from Mus musculus (Mouse).